Here is a 167-residue protein sequence, read N- to C-terminus: Bacterial non-heme ferritin-like protein (167 aa).

One can recognise a Ferritin-like diiron domain in the interval 1 to 145 (MATAGMLLKL…TILDEVRSAK (145 aa)).

The protein belongs to the ferritin family. Prokaryotic subfamily.

Its subcellular location is the cytoplasm. This Escherichia coli O157:H7 protein is Bacterial non-heme ferritin-like protein (ftnB).